We begin with the raw amino-acid sequence, 449 residues long: Trigger factor (449 aa).

Positions 162–247 (GDTVTIDYTG…IHEVKSKELP (86 aa)) constitute a PPIase FKBP-type domain. Positions 427–438 (AKKATKKSTAKK) are enriched in basic residues. Residues 427–449 (AKKATKKSTAKKSTKEDEKKADK) are disordered. The span at 439 to 449 (STKEDEKKADK) shows a compositional bias: basic and acidic residues.

This sequence belongs to the FKBP-type PPIase family. Tig subfamily.

The protein resides in the cytoplasm. The enzyme catalyses [protein]-peptidylproline (omega=180) = [protein]-peptidylproline (omega=0). Its function is as follows. Involved in protein export. Acts as a chaperone by maintaining the newly synthesized protein in an open conformation. Functions as a peptidyl-prolyl cis-trans isomerase. The chain is Trigger factor from Lactobacillus gasseri (strain ATCC 33323 / DSM 20243 / BCRC 14619 / CIP 102991 / JCM 1131 / KCTC 3163 / NCIMB 11718 / NCTC 13722 / AM63).